We begin with the raw amino-acid sequence, 693 residues long: Exocyst complex component 7 (693 aa).

Phosphoserine is present on Ser236. The disordered stretch occupies residues 236 to 259 (SWGHEALRPRHSGRQTEPKKTTSA).

This sequence belongs to the EXO70 family. The exocyst complex is composed of Sec3/Exoc1, Sec5/Exoc2, Sec6/Exoc3, Sec8/Exoc4, Sec10/Exoc5, Sec15/Exoc6, Exo70/Exoc7 and Exo84/Exoc8.

In terms of biological role, required for exocytosis. Thought to function in intracellular vesicle targeting and docking before SNARE complex formation. This Drosophila melanogaster (Fruit fly) protein is Exocyst complex component 7.